A 1426-amino-acid chain; its full sequence is DNA-directed RNA polymerase subunit beta' (1426 aa).

Zn(2+) contacts are provided by Cys71, Cys73, Cys86, and Cys89. Mg(2+)-binding residues include Asp461, Asp463, and Asp465. Zn(2+) contacts are provided by Cys814, Cys888, Cys895, and Cys898. The interval 1392-1426 (ADPIAAAESAIGLGGGEQPATSETGAGGSDPSEEG) is disordered.

The protein belongs to the RNA polymerase beta' chain family. As to quaternary structure, the RNAP catalytic core consists of 2 alpha, 1 beta, 1 beta' and 1 omega subunit. When a sigma factor is associated with the core the holoenzyme is formed, which can initiate transcription. The cofactor is Mg(2+). It depends on Zn(2+) as a cofactor.

It catalyses the reaction RNA(n) + a ribonucleoside 5'-triphosphate = RNA(n+1) + diphosphate. In terms of biological role, DNA-dependent RNA polymerase catalyzes the transcription of DNA into RNA using the four ribonucleoside triphosphates as substrates. This is DNA-directed RNA polymerase subunit beta' from Alkalilimnicola ehrlichii (strain ATCC BAA-1101 / DSM 17681 / MLHE-1).